Consider the following 357-residue polypeptide: Protein phosphatase 1 regulatory subunit 42 (357 aa).

7 LRR repeats span residues 29–50, 51–72, 73–94, 95–116, 117–138, 147–168, and 169–190; these read KITH…SLCK, NLSV…NYAT, NLTH…RSLK, KLEK…EGLG, ELRE…LFDP, SLSI…EILE, and NLNQ…EFLL. The 39-residue stretch at 204–242 folds into the LRRCT domain; it reads NPVCLKPKYRDRLILVSKSLEFLDGKEIKNIERQFLMNW.

Interacts with PPP1CC isoform gamma-2; the interaction is direct. Interacts with actin, dynein, KIF5B, KIFC1 and tubulin. Associates with microtubules. Post-translationally, phosphorylated; in the testis.

The protein localises to the cytoplasm. Its subcellular location is the cytoskeleton. The protein resides in the microtubule organizing center. It is found in the centrosome. Its function is as follows. Regulates phosphatase activity of protein phosphatase 1 (PP1) complexes in the testis. The polypeptide is Protein phosphatase 1 regulatory subunit 42 (PPP1R42) (Macaca fascicularis (Crab-eating macaque)).